Consider the following 335-residue polypeptide: Dihydroorotate dehydrogenase (quinone) (335 aa).

Residues 59-63 and T83 contribute to the FMN site; that span reads AGLDK. K63 provides a ligand contact to substrate. 108 to 112 contributes to the substrate binding site; that stretch reads NRMGF. FMN contacts are provided by N136 and N169. Position 169 (N169) interacts with substrate. The active-site Nucleophile is S172. Substrate is bound at residue N174. Residues K214 and T242 each coordinate FMN. 243-244 lines the substrate pocket; it reads NT. FMN is bound by residues G265, G294, and 315 to 316; that span reads YS.

The protein belongs to the dihydroorotate dehydrogenase family. Type 2 subfamily. Monomer. Requires FMN as cofactor.

Its subcellular location is the cell membrane. It catalyses the reaction (S)-dihydroorotate + a quinone = orotate + a quinol. It participates in pyrimidine metabolism; UMP biosynthesis via de novo pathway; orotate from (S)-dihydroorotate (quinone route): step 1/1. Functionally, catalyzes the conversion of dihydroorotate to orotate with quinone as electron acceptor. The polypeptide is Dihydroorotate dehydrogenase (quinone) (Neisseria meningitidis serogroup B (strain ATCC BAA-335 / MC58)).